The primary structure comprises 239 residues: 7-cyano-7-deazaguanine synthase (239 aa).

12 to 22 (FSGGQDSATCL) serves as a coordination point for ATP. 4 residues coordinate Zn(2+): C200, C215, C218, and C221.

It belongs to the QueC family. Zn(2+) serves as cofactor.

It carries out the reaction 7-carboxy-7-deazaguanine + NH4(+) + ATP = 7-cyano-7-deazaguanine + ADP + phosphate + H2O + H(+). Its pathway is purine metabolism; 7-cyano-7-deazaguanine biosynthesis. Functionally, catalyzes the ATP-dependent conversion of 7-carboxy-7-deazaguanine (CDG) to 7-cyano-7-deazaguanine (preQ(0)). This Hyphomonas neptunium (strain ATCC 15444) protein is 7-cyano-7-deazaguanine synthase.